The following is an 89-amino-acid chain: DNA-directed RNA polymerase subunit omega (89 aa).

The protein belongs to the RNA polymerase subunit omega family. In terms of assembly, the RNAP catalytic core consists of 2 alpha, 1 beta, 1 beta' and 1 omega subunit. When a sigma factor is associated with the core the holoenzyme is formed, which can initiate transcription.

The enzyme catalyses RNA(n) + a ribonucleoside 5'-triphosphate = RNA(n+1) + diphosphate. In terms of biological role, promotes RNA polymerase assembly. Latches the N- and C-terminal regions of the beta' subunit thereby facilitating its interaction with the beta and alpha subunits. The sequence is that of DNA-directed RNA polymerase subunit omega (rpoZ) from Pasteurella multocida (strain Pm70).